Reading from the N-terminus, the 118-residue chain is MISKPDKNKLRQKRHRRVRGKLSGTADRPRLNIFRSNTGIYAQVIDDVAGVTLASASTLDKEVSKGTKTEQAIVVGKLVAERAVAKGISEVVFDRGGYLYHGRVKALADSARENGLKF.

The tract at residues 1-22 (MISKPDKNKLRQKRHRRVRGKL) is disordered. Residues 10-20 (LRQKRHRRVRG) show a composition bias toward basic residues.

The protein belongs to the universal ribosomal protein uL18 family. In terms of assembly, part of the 50S ribosomal subunit; part of the 5S rRNA/L5/L18/L25 subcomplex. Contacts the 5S and 23S rRNAs.

In terms of biological role, this is one of the proteins that bind and probably mediate the attachment of the 5S RNA into the large ribosomal subunit, where it forms part of the central protuberance. This chain is Large ribosomal subunit protein uL18, found in Streptococcus thermophilus (strain ATCC BAA-491 / LMD-9).